We begin with the raw amino-acid sequence, 365 residues long: Probable caffeine synthase 4 (365 aa).

Residue Y18 participates in S-adenosyl-L-homocysteine binding. A caffeine-binding site is contributed by T25. S-adenosyl-L-homocysteine contacts are provided by C61, N66, D98, L99, S134, and F135. 3 residues coordinate caffeine: Y152, H155, and W156. Positions 173, 259, 261, and 262 each coordinate Mg(2+). F317 is a caffeine binding site.

The protein belongs to the methyltransferase superfamily. Type-7 methyltransferase family. Mg(2+) serves as cofactor.

The protein operates within alkaloid biosynthesis. May be involved in the biosynthesis of caffeine. This Camellia sinensis (Tea plant) protein is Probable caffeine synthase 4.